We begin with the raw amino-acid sequence, 421 residues long: Cell division protein FtsA (421 aa).

Belongs to the FtsA/MreB family. As to quaternary structure, self-interacts. Interacts with FtsZ.

The protein resides in the cell membrane. Cell division protein that is involved in the assembly of the Z ring. May serve as a membrane anchor for the Z ring. In Buchnera aphidicola subsp. Baizongia pistaciae (strain Bp), this protein is Cell division protein FtsA.